Consider the following 156-residue polypeptide: Inner membrane protein YlaC (156 aa).

The Cytoplasmic portion of the chain corresponds to 1-35; that stretch reads MTEIQRLLTETIESLNTREKRDNKPRFSISFIRKH. A helical membrane pass occupies residues 36-56; sequence PGLFIGMYVAFFATLAVMLQS. The Periplasmic segment spans residues 57-58; that stretch reads ET. The chain crosses the membrane as a helical span at residues 59-79; that stretch reads LSGSVWLLVVLFILLNGFFFF. The Cytoplasmic portion of the chain corresponds to 80 to 156; that stretch reads DVYPRYRYED…FTLARAESTS (77 aa).

Its subcellular location is the cell inner membrane. This chain is Inner membrane protein YlaC (ylaC), found in Escherichia coli (strain K12).